Consider the following 416-residue polypeptide: Enterobactin exporter EntS (416 aa).

The Cytoplasmic portion of the chain corresponds to Met-1–Ala-21. The chain crosses the membrane as a helical span at residues Val-22–Val-42. Over Gln-43–Gly-55 the chain is Periplasmic. Residues Leu-56–Ala-76 traverse the membrane as a helical segment. At Asp-77–Lys-83 the chain is on the cytoplasmic side. A helical membrane pass occupies residues Val-84–Leu-104. The Periplasmic portion of the chain corresponds to Leu-105 to Ser-109. Residues Leu-110 to Ala-130 traverse the membrane as a helical segment. The Cytoplasmic segment spans residues Leu-131–Arg-156. A helical transmembrane segment spans residues Leu-157–Trp-177. A topological domain (periplasmic) is located at residue Asn-178. A helical membrane pass occupies residues Tyr-179–Leu-199. The Cytoplasmic segment spans residues Pro-200 to Arg-218. Residues Phe-219–Ala-239 traverse the membrane as a helical segment. The Periplasmic segment spans residues Ser-240–Ser-256. The chain crosses the membrane as a helical span at residues Ala-257 to Thr-277. Over Ser-278–Pro-287 the chain is Cytoplasmic. The chain crosses the membrane as a helical span at residues Gly-288–Leu-307. Residues Met-308–Leu-313 are Periplasmic-facing. Residues Gly-314–Leu-336 form a helical membrane-spanning segment. Topologically, residues Gln-337–Asn-356 are cytoplasmic. The helical transmembrane segment at Val-357–Val-377 threads the bilayer. Residue Ala-378 is a topological domain, periplasmic. The chain crosses the membrane as a helical span at residues Ser-379 to Val-399. Residues Glu-400–Ser-416 are Cytoplasmic-facing.

Belongs to the major facilitator superfamily. EntS (TC 2.A.1.38) family.

The protein resides in the cell inner membrane. Functionally, component of an export pathway for enterobactin. This Escherichia coli O6:K15:H31 (strain 536 / UPEC) protein is Enterobactin exporter EntS.